The sequence spans 128 residues: uncharacterized protein (128 aa).

Residues 8 to 28 traverse the membrane as a helical segment; that stretch reads YQAIYLIFAGFTVFGLLLHFY.

The protein resides in the membrane. This is an uncharacterized protein from Haemophilus influenzae (strain ATCC 51907 / DSM 11121 / KW20 / Rd).